A 407-amino-acid chain; its full sequence is Probable tRNA sulfurtransferase (407 aa).

The THUMP domain maps to 61–165; that stretch reads NEIIQRLSKV…MDAIYIYEKV (105 aa). Residues 183 to 184, 208 to 209, Arg265, Gly287, and Gln296 contribute to the ATP site; these read ML and HF.

This sequence belongs to the ThiI family.

The protein localises to the cytoplasm. It catalyses the reaction [ThiI sulfur-carrier protein]-S-sulfanyl-L-cysteine + a uridine in tRNA + 2 reduced [2Fe-2S]-[ferredoxin] + ATP + H(+) = [ThiI sulfur-carrier protein]-L-cysteine + a 4-thiouridine in tRNA + 2 oxidized [2Fe-2S]-[ferredoxin] + AMP + diphosphate. The enzyme catalyses [ThiS sulfur-carrier protein]-C-terminal Gly-Gly-AMP + S-sulfanyl-L-cysteinyl-[cysteine desulfurase] + AH2 = [ThiS sulfur-carrier protein]-C-terminal-Gly-aminoethanethioate + L-cysteinyl-[cysteine desulfurase] + A + AMP + 2 H(+). It participates in cofactor biosynthesis; thiamine diphosphate biosynthesis. Catalyzes the ATP-dependent transfer of a sulfur to tRNA to produce 4-thiouridine in position 8 of tRNAs, which functions as a near-UV photosensor. Also catalyzes the transfer of sulfur to the sulfur carrier protein ThiS, forming ThiS-thiocarboxylate. This is a step in the synthesis of thiazole, in the thiamine biosynthesis pathway. The sulfur is donated as persulfide by IscS. The protein is Probable tRNA sulfurtransferase of Staphylococcus epidermidis (strain ATCC 35984 / DSM 28319 / BCRC 17069 / CCUG 31568 / BM 3577 / RP62A).